The chain runs to 507 residues: ATP synthase subunit beta (507 aa).

Positions 1-22 (MSSLANKAKSKGKSSKSKSNVN) are disordered. 183–190 (GGAGVGKT) contributes to the ATP binding site.

Belongs to the ATPase alpha/beta chains family. As to quaternary structure, F-type ATPases have 2 components, CF(1) - the catalytic core - and CF(0) - the membrane proton channel. CF(1) has five subunits: alpha(3), beta(3), gamma(1), delta(1), epsilon(1). CF(0) has three main subunits: a(1), b(2) and c(9-12). The alpha and beta chains form an alternating ring which encloses part of the gamma chain. CF(1) is attached to CF(0) by a central stalk formed by the gamma and epsilon chains, while a peripheral stalk is formed by the delta and b chains.

The protein localises to the cell inner membrane. It carries out the reaction ATP + H2O + 4 H(+)(in) = ADP + phosphate + 5 H(+)(out). Its function is as follows. Produces ATP from ADP in the presence of a proton gradient across the membrane. The catalytic sites are hosted primarily by the beta subunits. The chain is ATP synthase subunit beta from Ehrlichia canis (strain Jake).